The sequence spans 332 residues: D-alanine--D-alanine ligase (332 aa).

In terms of domain architecture, ATP-grasp spans Lys124–Asn329. Ala154–Glu209 serves as a coordination point for ATP. Mg(2+)-binding residues include Asp283, Glu296, and Asn298.

The protein belongs to the D-alanine--D-alanine ligase family. Requires Mg(2+) as cofactor. Mn(2+) is required as a cofactor.

Its subcellular location is the cytoplasm. The enzyme catalyses 2 D-alanine + ATP = D-alanyl-D-alanine + ADP + phosphate + H(+). It functions in the pathway cell wall biogenesis; peptidoglycan biosynthesis. In terms of biological role, cell wall formation. This is D-alanine--D-alanine ligase from Shewanella piezotolerans (strain WP3 / JCM 13877).